A 316-amino-acid chain; its full sequence is Coiled-coil domain-containing protein 130 homolog (316 aa).

A coiled-coil region spans residues 182–203 (ANSRLRAEFRQQKKEINGQQEL). The disordered stretch occupies residues 287 to 316 (KLEETTSSATNEKPISLVGDYSSSDNDSNG).

The protein belongs to the CWC16 family.

This Drosophila melanogaster (Fruit fly) protein is Coiled-coil domain-containing protein 130 homolog.